Consider the following 231-residue polypeptide: MRGFFVTGTDTEVGKTVISSGLAALLKEHNRDVGVYKPFLSGISRHHPDSDTSLLKDMSQTSLSHEDITPFAFKAPLAPYVAGKLEGKTVTMEEVLSHWGRIREKHECFIVEGAGGISVPLGEDYLVSHVIKALQLPMIIVARPHLGTINHTFLTVKYAESMGLPIAGIIINGISDSPDEDEKTNPEMIERLCGVPILGVTPKLANVTKETVLHMVKDHINLSLLMNQMGV.

12-17 (EVGKTV) is an ATP binding site. Mg(2+) is bound at residue T16. K37 is an active-site residue. S41 lines the substrate pocket. Residues D51, 112–115 (EGAG), and 202–204 (PKL) each bind ATP. Mg(2+) contacts are provided by D51 and E112.

Belongs to the dethiobiotin synthetase family. Homodimer. Requires Mg(2+) as cofactor.

The protein resides in the cytoplasm. It carries out the reaction (7R,8S)-7,8-diammoniononanoate + CO2 + ATP = (4R,5S)-dethiobiotin + ADP + phosphate + 3 H(+). Its pathway is cofactor biosynthesis; biotin biosynthesis; biotin from 7,8-diaminononanoate: step 1/2. Catalyzes a mechanistically unusual reaction, the ATP-dependent insertion of CO2 between the N7 and N8 nitrogen atoms of 7,8-diaminopelargonic acid (DAPA, also called 7,8-diammoniononanoate) to form a ureido ring. The sequence is that of ATP-dependent dethiobiotin synthetase BioD from Bacillus subtilis subsp. natto.